We begin with the raw amino-acid sequence, 391 residues long: Decapping nuclease RAI1 (391 aa).

Glu174 is a binding site for a divalent metal cation. Glu223 provides a ligand contact to substrate. A divalent metal cation contacts are provided by Asp225, Glu244, and Leu245. 2 residues coordinate substrate: Lys246 and Gln270.

This sequence belongs to the DXO/Dom3Z family. Interacts with RAT1; the interaction is direct, stabilizes RAT1 protein structure and stimulates its exoribonuclease activity. The interaction also stimulates RAI1 pyrophosphohydrolase activity, probably by recruiting it to mRNA substrates. The cofactor is a divalent metal cation.

It localises to the nucleus. The enzyme catalyses a 5'-end NAD(+)-phospho-ribonucleoside in mRNA + H2O = a 5'-end phospho-ribonucleoside in mRNA + NAD(+) + H(+). The catalysed reaction is a 5'-end (N(7)-methyl 5'-triphosphoguanosine)-ribonucleoside-ribonucleotide in mRNA + H2O = a (N(7)-methyl 5'-triphosphoguanosine)-nucleoside + a 5'-end phospho-ribonucleoside in mRNA + H(+). It carries out the reaction a 5'-end triphospho-ribonucleoside in mRNA + H2O = a 5'-end phospho-ribonucleoside in mRNA + diphosphate + H(+). Functionally, decapping enzyme for NAD-capped RNAs: specifically hydrolyzes the nicotinamide adenine dinucleotide (NAD) cap from a subset of RNAs by removing the entire NAD moiety from the 5'-end of an NAD-capped RNA. The NAD-cap is present at the 5'-end of some RNAs and snoRNAs. In contrast to the canonical 5'-end N7 methylguanosine (m7G) cap, the NAD cap promotes mRNA decay. Also acts as a non-canonical decapping enzyme that removes the entire cap structure of m7G capped or incompletely capped RNAs. Has decapping activity toward incomplete 5'-end m7G cap mRNAs such as unmethylated 5'-end-capped RNA (cap0), while it has no activity toward 2'-O-ribose methylated m7G cap (cap1). Also possesses RNA 5'-pyrophosphohydrolase activity by hydrolyzing the 5'-end triphosphate to release pyrophosphates. Stimulates exoribonuclease activity of Rat1, allowing it to degrade RNAs with stable secondary structure more effectively. The sequence is that of Decapping nuclease RAI1 from Candida albicans (strain SC5314 / ATCC MYA-2876) (Yeast).